The primary structure comprises 438 residues: Glyceraldehyde-3-phosphate dehydrogenase B, chloroplastic (438 aa).

The transit peptide at 1-53 directs the protein to the chloroplast; the sequence is CLSKKFEVAEFAGLRSSGCVTFSNKESSFFDVVSAQLTPKTTRSTPVKGETVA. NADP(+) contacts are provided by residues 64–65, D88, and R133; that span reads RI. D-glyceraldehyde 3-phosphate contacts are provided by residues 207–209, T238, R253, 266–267, and R289; these read SCT and TG. C208 functions as the Nucleophile in the catalytic mechanism. Residue N372 coordinates NADP(+).

The protein belongs to the glyceraldehyde-3-phosphate dehydrogenase family. As to quaternary structure, tetramer of either four A chains (GAPDH 2) or two A and two B chains (GAPDH 1).

Its subcellular location is the plastid. It localises to the chloroplast. The enzyme catalyses D-glyceraldehyde 3-phosphate + phosphate + NADP(+) = (2R)-3-phospho-glyceroyl phosphate + NADPH + H(+). It participates in carbohydrate biosynthesis; Calvin cycle. This Nicotiana tabacum (Common tobacco) protein is Glyceraldehyde-3-phosphate dehydrogenase B, chloroplastic (GAPB).